The following is a 447-amino-acid chain: Methylenetetrahydrofolate--tRNA-(uracil-5-)-methyltransferase TrmFO (447 aa).

An FAD-binding site is contributed by 9-14 (GGGLAG).

It belongs to the MnmG family. TrmFO subfamily. It depends on FAD as a cofactor.

It localises to the cytoplasm. The enzyme catalyses uridine(54) in tRNA + (6R)-5,10-methylene-5,6,7,8-tetrahydrofolate + NADH + H(+) = 5-methyluridine(54) in tRNA + (6S)-5,6,7,8-tetrahydrofolate + NAD(+). It carries out the reaction uridine(54) in tRNA + (6R)-5,10-methylene-5,6,7,8-tetrahydrofolate + NADPH + H(+) = 5-methyluridine(54) in tRNA + (6S)-5,6,7,8-tetrahydrofolate + NADP(+). Functionally, catalyzes the folate-dependent formation of 5-methyl-uridine at position 54 (M-5-U54) in all tRNAs. This is Methylenetetrahydrofolate--tRNA-(uracil-5-)-methyltransferase TrmFO from Paramagnetospirillum magneticum (strain ATCC 700264 / AMB-1) (Magnetospirillum magneticum).